Here is a 397-residue protein sequence, read N- to C-terminus: FAD-dependent monooxygenase trt8 (397 aa).

Tyr-53 is a catalytic residue. FAD contacts are provided by Asp-145 and Ala-158.

This sequence belongs to the paxM FAD-dependent monooxygenase family. FAD is required as a cofactor.

The protein operates within secondary metabolite biosynthesis; terpenoid biosynthesis. Functionally, FAD-dependent monooxygenase; part of the gene cluster that mediates the biosynthesis of terretonin, a fungal meroterpenoid that acts as a mycotoxin. The first step of the pathway is the synthesis of 3,5-dimethylorsellinic acid (DMOA) by the polyketide synthase trt4. DMOA is then prenylated into farnesyl-DMOA by the polyprenyl transferase trt2. Methylation by the methyltransferase trt5 then leads to farnesyl-DMOA methyl ester which is further subject to epoxidation by the FAD-dependent monooxygenase trt8 to yield epoxyfarnesyl-DMOA methyl ester. Cyclization of epoxyfarnesyl-DMOA methyl ester by the terpene cyclase trt1 leads to a tetracycle intermediate which is in turn converted to preterretonin. Dehydrogenase trt9 comes next to transform preterretonin to preterrenoid. The FAD-dependent monooxygenase trt3 is then required for the C-hydroxylation at C16 of preterrenoid to yield terrenoid. The cytochrome P450 trt6 catalyzes three successive oxidations to transform terrenoid into an unstable intermediate, which then undergoes the D-ring expansion and unusual rearrangement of the methoxy group to afford the core skeleton of terretonin. Trt14 catalyzes the D-ring expansion of terretonin involving intramolecular methoxy rearrangement as well as the hydrolysis of the expanded D-ring and the methyl ester moiety. Finally, the nonheme iron-dependent dioxygenase trt7 accomplishes the last two oxidation reactions steps to complete the biosynthesis of terretonin. Terretonin C is produced via spontaneous decarboxylation of the terretonin precursor. Another shunt product of the terretonin biosynthesis is dihydrofarnesyl-DMOA, derived from epoxyfarnesyl-DMOA through hydrolysis of the epoxide. In Aspergillus terreus (strain NIH 2624 / FGSC A1156), this protein is FAD-dependent monooxygenase trt8.